The following is a 218-amino-acid chain: Large ribosomal subunit protein uL4 (218 aa).

The disordered stretch occupies residues Gly54–Gln106.

This sequence belongs to the universal ribosomal protein uL4 family. As to quaternary structure, part of the 50S ribosomal subunit.

Its function is as follows. One of the primary rRNA binding proteins, this protein initially binds near the 5'-end of the 23S rRNA. It is important during the early stages of 50S assembly. It makes multiple contacts with different domains of the 23S rRNA in the assembled 50S subunit and ribosome. In terms of biological role, forms part of the polypeptide exit tunnel. The sequence is that of Large ribosomal subunit protein uL4 from Bifidobacterium animalis subsp. lactis (strain AD011).